A 317-amino-acid chain; its full sequence is Melanocyte-stimulating hormone receptor (317 aa).

Over 1 to 37 (MPVQGSQRRLLGSLNSTPTATPHLGLAANQTGARCLE) the chain is Extracellular. Residue asparagine 29 is glycosylated (N-linked (GlcNAc...) asparagine). The helical transmembrane segment at 38–63 (MSIPDGLFLSLGLVSLVENVLVVTAI) threads the bilayer. The Cytoplasmic segment spans residues 64–72 (AKNRNLHSP). A helical membrane pass occupies residues 73–93 (MYCFICCLALSDLLVSGSNML). At 94-118 (ETAVTLLLEAGALAARAAVVQQLDN) the chain is on the extracellular side. A helical membrane pass occupies residues 119–140 (VIDVITCSSMLSSLCFLGAIAV). The Cytoplasmic portion of the chain corresponds to 141 to 163 (DRYISIFYALRYHSIVTLPRARR). A helical membrane pass occupies residues 164–183 (AIAAIWVASVLCSTLFIAYY). Topologically, residues 184 to 191 (DHAAVLLC) are extracellular. Residues 192–211 (LVVFFLAMLVLMAVLYVHML) form a helical membrane-spanning segment. Topologically, residues 212-240 (ARACQHAQGIARLHKRQRLAHQGFGLKGA) are cytoplasmic. The helical transmembrane segment at 241-266 (ATLTILLGIFFLCWGPFFLHLTLIVL) threads the bilayer. Over 267-279 (CPQHPTCSCIFKN) the chain is Extracellular. Residues 280–300 (FNLFLTLIICNAIIDPLIYAF) traverse the membrane as a helical segment. Over 301–317 (RSQELRRTLKEVLLCSW) the chain is Cytoplasmic. The S-palmitoyl cysteine moiety is linked to residue cysteine 315.

The protein belongs to the G-protein coupled receptor 1 family. As to quaternary structure, interacts with MGRN1, but does not undergo MGRN1-mediated ubiquitination; this interaction competes with GNAS-binding and thus inhibits agonist-induced cAMP production. Interacts with OPN3; the interaction results in a decrease in MC1R-mediated cAMP signaling and ultimately a decrease in melanin production in melanocytes.

The protein localises to the cell membrane. In terms of biological role, receptor for MSH (alpha, beta and gamma) and ACTH. The activity of this receptor is mediated by G proteins which activate adenylate cyclase. Mediates melanogenesis, the production of eumelanin (black/brown) and phaeomelanin (red/yellow), via regulation of cAMP signaling in melanocytes. This Macaca nemestrina (Pig-tailed macaque) protein is Melanocyte-stimulating hormone receptor (MC1R).